A 105-amino-acid chain; its full sequence is MASNQQLKIRIQLRSYDSSLLENSCEQIIEAAKRTDATAVGPIPLPTKKKIYCVLRSPHVDKDSREHFEIRVHRRIIDLYLPSSKTIDTLTRLDLPAGVDVEVKL.

This sequence belongs to the universal ribosomal protein uS10 family. Part of the 30S ribosomal subunit.

The protein resides in the plastid. Its subcellular location is the cyanelle. In terms of biological role, involved in the binding of tRNA to the ribosomes. The chain is Small ribosomal subunit protein uS10c (rps10) from Cyanophora paradoxa.